The following is a 363-amino-acid chain: Protein disulfide-isomerase 1 (363 aa).

Residues 1 to 20 (MKILLFVTLIALAFVALCSA) form the signal peptide. 2 Thioredoxin domains span residues 21–132 (EGNV…NHAK) and 133–285 (TNVK…AAAE). Active-site nucleophile residues include Cys-51, Cys-54, Cys-172, and Cys-175. Intrachain disulfides connect Cys-51-Cys-54 and Cys-172-Cys-175.

This sequence belongs to the protein disulfide isomerase family.

The protein localises to the endoplasmic reticulum lumen. It carries out the reaction Catalyzes the rearrangement of -S-S- bonds in proteins.. In terms of biological role, participates in the folding of proteins containing disulfide bonds, may be involved in glycosylation, prolyl hydroxylation and triglyceride transfer. In Dictyostelium discoideum (Social amoeba), this protein is Protein disulfide-isomerase 1 (pdi1).